We begin with the raw amino-acid sequence, 734 residues long: MALRFPRFSQGLAQDPTTRRIWFGIATAHDFESHDDITEERLYQNIFASHFGQLAIIFLWTSGNLFHVAWQGNFETWIQDPLHVRPIAHAIWDPHFGQPAVEAFTRGGALGPVNIAYSGVYQWWYTIGLRTNEDLYTGALFLLFLSALSLIGGWLHLQPKWKPRVSWFKNAESRLNHHLSGLFGVSSLAWTGHLVHVAIPASRGEYVRWNNFLNVLPHPQGLGPLFTGQWNLYAQNPDSSSHLFGTSQGSGTAILTLLGGFHPQTQSLWLTDMAHHHLAIAILFLIAGHMYRTNFGIGHSIKDLLEAHIPPGGRLGRGHKGLYDTINNSIHFQLGLALASLGVITSLVAQHMYSLPAYAFIAQDFTTQAALYTHHQYIAGFIMTGAFAHGAIFFIRDYNPEQNEDNVLARMLDHKEAIISQLSWASLFLGFHTLGLYVHNDVMLAFGTSEKQILIEPIFAQWIQSAHGKTSYGFDVLLSSTNGPAFNAGRSIWLPGWLNAINENSNSLFLTIGPGDFLVHHAIALGLHTTTLILVKGALDARGSKLMPDKKDFGYSFPCDGPGRGGTCDISAWDAFYLAVFWMLNTIGWVTFYWHWKHITLWQGNVSQFNESSTYLMGWLRDYLWLNSSQLINGYNPFGMNSLSVWAWMFLFGHLVWATGFMFLISWRGYWQELIETLAWAHERTPLANLIRWKDKPVALSIVQARLVGLAHFSVGYIFTYAAFLIASTSGKFG.

8 helical membrane passes run 46 to 69, 135 to 158, 175 to 199, 273 to 291, 330 to 353, 369 to 395, 417 to 439, and 517 to 535; these read IFAS…FHVA, LYTG…LHLQ, LNHH…HVAI, MAHH…GHMY, IHFQ…QHMY, AALY…IFFI, AIIS…LYVH, and FLVH…LILV. [4Fe-4S] cluster-binding residues include Cys-559 and Cys-568. The next 2 helical transmembrane spans lie at 575-596 and 643-665; these read AFYL…YWHW and LSVW…MFLI. Positions 654, 662, and 670 each coordinate chlorophyll a. Position 671 (Trp-671) interacts with phylloquinone. Residues 707–727 form a helical membrane-spanning segment; that stretch reads LVGLAHFSVGYIFTYAAFLIA.

This sequence belongs to the PsaA/PsaB family. As to quaternary structure, the PsaA/B heterodimer binds the P700 chlorophyll special pair and subsequent electron acceptors. PSI consists of a core antenna complex that captures photons, and an electron transfer chain that converts photonic excitation into a charge separation. The eukaryotic PSI reaction center is composed of at least 11 subunits. P700 is a chlorophyll a/chlorophyll a' dimer, A0 is one or more chlorophyll a, A1 is one or both phylloquinones and FX is a shared 4Fe-4S iron-sulfur center. serves as cofactor.

It is found in the plastid. The protein resides in the chloroplast thylakoid membrane. It carries out the reaction reduced [plastocyanin] + hnu + oxidized [2Fe-2S]-[ferredoxin] = oxidized [plastocyanin] + reduced [2Fe-2S]-[ferredoxin]. In terms of biological role, psaA and PsaB bind P700, the primary electron donor of photosystem I (PSI), as well as the electron acceptors A0, A1 and FX. PSI is a plastocyanin-ferredoxin oxidoreductase, converting photonic excitation into a charge separation, which transfers an electron from the donor P700 chlorophyll pair to the spectroscopically characterized acceptors A0, A1, FX, FA and FB in turn. Oxidized P700 is reduced on the lumenal side of the thylakoid membrane by plastocyanin. The chain is Photosystem I P700 chlorophyll a apoprotein A2 from Draba nemorosa (Woodland whitlowgrass).